We begin with the raw amino-acid sequence, 371 residues long: Beta-1,3-galactosyltransferase 4 (371 aa).

At 1–4 the chain is on the cytoplasmic side; the sequence is MPLS. The chain crosses the membrane as a helical; Signal-anchor for type II membrane protein span at residues 5–25; it reads LFRRVLLAVLLLVIIWTLFGP. The Lumenal segment spans residues 26 to 371; sequence SGLGEELLSL…RCRFIAWFSS (346 aa). The N-linked (GlcNAc...) asparagine glycan is linked to N143.

The protein belongs to the glycosyltransferase 31 family. As to expression, expressed in heart, brain, spleen, kidney, lung and testis.

It localises to the golgi apparatus membrane. The catalysed reaction is a ganglioside GM2 (d18:1(4E)) + UDP-alpha-D-galactose = a ganglioside GM1 (d18:1(4E)) + UDP + H(+). The enzyme catalyses a ganglioside GM2 + UDP-alpha-D-galactose = a ganglioside GM1 + UDP + H(+). It catalyses the reaction a ganglioside GD2 (d18:1(4E)) + UDP-alpha-D-galactose = a ganglioside GD1b (d18:1(4E)) + UDP + H(+). It carries out the reaction a ganglioside GA2 (d18:1(4E)) + UDP-alpha-D-galactose = a ganglioside GA1 (d18:1(4E)) + UDP + H(+). The protein operates within protein modification; protein glycosylation. In terms of biological role, involved in GM1/GD1B/GA1 ganglioside biosynthesis. The sequence is that of Beta-1,3-galactosyltransferase 4 from Mus musculus (Mouse).